A 292-amino-acid chain; its full sequence is Xyloglucan endotransglucosylase/hydrolase protein A (292 aa).

The signal sequence occupies residues 1–20 (MGSSLWTCLILLSLASASFA). Residues 21 to 219 (ANPRTPIDVP…WSKAPFIASY (199 aa)) form the GH16 domain. The active-site Nucleophile is glutamate 105. The Proton donor role is filled by glutamate 109. Residue glutamate 109 coordinates xyloglucan. Residue asparagine 113 is glycosylated (N-linked (GlcNAc...) asparagine). Xyloglucan contacts are provided by residues 122 to 124 (QTN), 132 to 134 (DRE), 198 to 199 (DW), and glycine 203. 2 disulfide bridges follow: cysteine 227–cysteine 236 and cysteine 273–cysteine 286. Position 278 (arginine 278) interacts with xyloglucan.

The protein belongs to the glycosyl hydrolase 16 family. XTH group 1 subfamily. Post-translationally, contains at least one intrachain disulfide bond essential for its enzymatic activity. Predominantly expressed in the phloem fibers of growing internodes. Expressed in xylem cells in the basal part of the internode. In the internode, it is expressed closer to the top of the internode compared to XTHB.

It is found in the secreted. The protein localises to the cell wall. It localises to the extracellular space. Its subcellular location is the apoplast. The enzyme catalyses breaks a beta-(1-&gt;4) bond in the backbone of a xyloglucan and transfers the xyloglucanyl segment on to O-4 of the non-reducing terminal glucose residue of an acceptor, which can be a xyloglucan or an oligosaccharide of xyloglucan.. Functionally, catalyzes xyloglucan endohydrolysis (XEH) and/or endotransglycosylation (XET). Cleaves and religates xyloglucan polymers, an essential constituent of the primary cell wall, and thereby participates in cell wall construction of growing tissues. In Phaseolus angularis (Azuki bean), this protein is Xyloglucan endotransglucosylase/hydrolase protein A (XTHA).